Reading from the N-terminus, the 247-residue chain is Coproheme decarboxylase (247 aa).

Residues Arg129, 143–147 (YPMDK), His170, Gln183, and Ser221 each bind Fe-coproporphyrin III. The active site involves Tyr143.

It belongs to the ChdC family. Type 1 subfamily. Fe-coproporphyrin III is required as a cofactor.

It carries out the reaction Fe-coproporphyrin III + 2 H2O2 + 2 H(+) = heme b + 2 CO2 + 4 H2O. The catalysed reaction is Fe-coproporphyrin III + H2O2 + H(+) = harderoheme III + CO2 + 2 H2O. It catalyses the reaction harderoheme III + H2O2 + H(+) = heme b + CO2 + 2 H2O. Its pathway is porphyrin-containing compound metabolism; protoheme biosynthesis. In terms of biological role, involved in coproporphyrin-dependent heme b biosynthesis. Catalyzes the decarboxylation of Fe-coproporphyrin III (coproheme) to heme b (protoheme IX), the last step of the pathway. The reaction occurs in a stepwise manner with a three-propionate intermediate. The chain is Coproheme decarboxylase from Bacillus anthracis.